Consider the following 559-residue polypeptide: Glucose-6-phosphate isomerase (559 aa).

Glu-352 functions as the Proton donor in the catalytic mechanism. Catalysis depends on residues His-383 and Lys-511.

The protein belongs to the GPI family.

The protein localises to the cytoplasm. The catalysed reaction is alpha-D-glucose 6-phosphate = beta-D-fructose 6-phosphate. The protein operates within carbohydrate biosynthesis; gluconeogenesis. It functions in the pathway carbohydrate degradation; glycolysis; D-glyceraldehyde 3-phosphate and glycerone phosphate from D-glucose: step 2/4. Its function is as follows. Catalyzes the reversible isomerization of glucose-6-phosphate to fructose-6-phosphate. The chain is Glucose-6-phosphate isomerase from Chlorobaculum tepidum (strain ATCC 49652 / DSM 12025 / NBRC 103806 / TLS) (Chlorobium tepidum).